Here is a 284-residue protein sequence, read N- to C-terminus: Bifunctional protein FolD (284 aa).

NADP(+)-binding positions include 166 to 168 (GAS) and Ile-232.

This sequence belongs to the tetrahydrofolate dehydrogenase/cyclohydrolase family. Homodimer.

It carries out the reaction (6R)-5,10-methylene-5,6,7,8-tetrahydrofolate + NADP(+) = (6R)-5,10-methenyltetrahydrofolate + NADPH. The catalysed reaction is (6R)-5,10-methenyltetrahydrofolate + H2O = (6R)-10-formyltetrahydrofolate + H(+). It functions in the pathway one-carbon metabolism; tetrahydrofolate interconversion. Catalyzes the oxidation of 5,10-methylenetetrahydrofolate to 5,10-methenyltetrahydrofolate and then the hydrolysis of 5,10-methenyltetrahydrofolate to 10-formyltetrahydrofolate. This is Bifunctional protein FolD from Shewanella sp. (strain W3-18-1).